A 203-amino-acid polypeptide reads, in one-letter code: Ribonuclease HII (203 aa).

The region spanning 16-203 (ENIACCDEVG…HRKSFLNKIL (188 aa)) is the RNase H type-2 domain. Residues Asp22, Glu23, and Asp120 each contribute to the a divalent metal cation site.

The protein belongs to the RNase HII family. It depends on Mn(2+) as a cofactor. Mg(2+) is required as a cofactor.

Its subcellular location is the cytoplasm. It catalyses the reaction Endonucleolytic cleavage to 5'-phosphomonoester.. Endonuclease that specifically degrades the RNA of RNA-DNA hybrids. The protein is Ribonuclease HII of Alkaliphilus oremlandii (strain OhILAs) (Clostridium oremlandii (strain OhILAs)).